A 313-amino-acid polypeptide reads, in one-letter code: Homoserine O-succinyltransferase (313 aa).

The active-site Acyl-thioester intermediate is the cysteine 142. Positions 163 and 192 each coordinate substrate. Histidine 235 acts as the Proton acceptor in catalysis. Glutamate 237 is a catalytic residue. Arginine 249 provides a ligand contact to substrate.

The protein belongs to the MetA family.

It localises to the cytoplasm. The enzyme catalyses L-homoserine + succinyl-CoA = O-succinyl-L-homoserine + CoA. The protein operates within amino-acid biosynthesis; L-methionine biosynthesis via de novo pathway; O-succinyl-L-homoserine from L-homoserine: step 1/1. Transfers a succinyl group from succinyl-CoA to L-homoserine, forming succinyl-L-homoserine. The sequence is that of Homoserine O-succinyltransferase from Vibrio vulnificus (strain YJ016).